Reading from the N-terminus, the 294-residue chain is Putative ribose uptake protein RbsU (294 aa).

The next 10 membrane-spanning stretches (helical) occupy residues 2-24 (NAVN…VIVG), 34-56 (ILGT…GTPI), 63-82 (IFCL…TFHV), 92-114 (MPIT…LGNW), 121-140 (LIGF…TAWS), 150-172 (GAVK…SAFP), 179-198 (GFQG…IIFG), 218-235 (IFSG…LISA), 242-264 (LATG…IYIL), and 274-293 (IAVM…TAFI).

The protein belongs to the GRP transporter (TC 2.A.7.5) family.

It is found in the cell membrane. Its function is as follows. Could be involved in the uptake of ribose. This Latilactobacillus sakei subsp. sakei (strain 23K) (Lactobacillus sakei subsp. sakei) protein is Putative ribose uptake protein RbsU (rbsU).